A 290-amino-acid chain; its full sequence is Prepilin leader peptidase/N-methyltransferase (290 aa).

The helical transmembrane segment at 13-33 (AFVLCTILLGLLVGSFLNVVV) threads the bilayer. Cys72, Cys75, Cys97, and Cys100 together coordinate Zn(2+). 5 consecutive transmembrane segments (helical) span residues 128–148 (FTWQAGAMLLLTWGLLAMSLI), 158–178 (VLVLPLLWLGLIANHFGLFAS), 183–203 (LFGAVFGYLSLWSVFWLFKLV), 228–248 (ILPLTILLSSLVGAILGVIML), and 261–276 (FGPYLAIAGWIALLWG).

It belongs to the peptidase A24 family. Zn(2+) is required as a cofactor.

Its subcellular location is the cell inner membrane. The catalysed reaction is Typically cleaves a -Gly-|-Phe- bond to release an N-terminal, basic peptide of 5-8 residues from type IV prepilin, and then N-methylates the new N-terminal amino group, the methyl donor being S-adenosyl-L-methionine.. In terms of biological role, plays an essential role in type IV pili and type II pseudopili formation by proteolytically removing the leader sequence from substrate proteins and subsequently monomethylating the alpha-amino group of the newly exposed N-terminal phenylalanine. Substrates include proteins required for pilus biogenesis PilE, PilV, PilW, and PilX as well as some components of the type II general secretory apparatus GspG, GspH, GspI and GspJ. The protein is Prepilin leader peptidase/N-methyltransferase (pilD) of Pseudomonas aeruginosa (strain ATCC 15692 / DSM 22644 / CIP 104116 / JCM 14847 / LMG 12228 / 1C / PRS 101 / PAO1).